Reading from the N-terminus, the 620-residue chain is Siderophore iron transporter ARN2 (620 aa).

A disordered region spans residues 1-42 (MIEVPEDNRSSQTKRKNTEKNCNELMVDEKMDDDSSPRDEMK). The segment covering 16–42 (KNTEKNCNELMVDEKMDDDSSPRDEMK) has biased composition (basic and acidic residues). 14 helical membrane passes run 71 to 93 (IFLFSAFICTFAYGLDSSIRGTY), 106 to 128 (LISTVSVIVLMISAVSQVIFGGL), 135 to 152 (LTLFLVSIVLYIVGTIIQ), 162 to 184 (AAGAVFYYVGLVGVMLQVVLMLS), 191 to 213 (WRLFYTLIPSWPSIITTWVSGSV), 223 to 245 (WSWNIAMWAFIFPLCCIPLILCM), 286 to 308 (VVGVLLFTAGVGCILVPLTLAGG), 318 to 335 (IIGPFVLGFVLVPGFIYW), 355 to 377 (VWAPLGIMFFICFVYQMAAGYLY), 392 to 414 (TRIINLYSFVTAVVAPFLGLIVT), 421 to 438 (SYIIFGGSLYFITMGLFY), 448 to 470 (GGIIAGMVIWGLSSCLFDYPTIV), 491 to 513 (VFRIGGAVAAAISGAIWTQSLYP), and 561 to 578 (VIVALVFSAPMFLLTFCV).

This sequence belongs to the major facilitator superfamily.

Its subcellular location is the endosome membrane. Functionally, involved in the transport of siderophore triacestylfusarinine C and so has a role in iron homeostasis. In Saccharomyces cerevisiae (strain ATCC 204508 / S288c) (Baker's yeast), this protein is Siderophore iron transporter ARN2 (ARN2).